Reading from the N-terminus, the 321-residue chain is 2,3,4,5-tetrahydropyridine-2,6-dicarboxylate N-succinyltransferase (321 aa).

2 residues coordinate Mg(2+): aspartate 166 and glutamate 183. The Acyl-anhydride intermediate role is filled by glutamate 199. Succinyl-CoA-binding positions include arginine 201, glycine 216, serine 219, alanine 242, 257–258 (EA), glycine 265, lysine 281, and 294–297 (RRNS).

Belongs to the type 2 tetrahydrodipicolinate N-succinyltransferase family. As to quaternary structure, homotrimer.

It is found in the cytoplasm. The catalysed reaction is (S)-2,3,4,5-tetrahydrodipicolinate + succinyl-CoA + H2O = (S)-2-succinylamino-6-oxoheptanedioate + CoA. It participates in amino-acid biosynthesis; L-lysine biosynthesis via DAP pathway; LL-2,6-diaminopimelate from (S)-tetrahydrodipicolinate (succinylase route): step 1/3. Functionally, catalyzes the conversion of the cyclic tetrahydrodipicolinate (THDP) into the acyclic N-succinyl-L-2-amino-6-oxopimelate using succinyl-CoA. The polypeptide is 2,3,4,5-tetrahydropyridine-2,6-dicarboxylate N-succinyltransferase (Micrococcus luteus (strain ATCC 4698 / DSM 20030 / JCM 1464 / CCM 169 / CCUG 5858 / IAM 1056 / NBRC 3333 / NCIMB 9278 / NCTC 2665 / VKM Ac-2230) (Micrococcus lysodeikticus)).